Here is a 486-residue protein sequence, read N- to C-terminus: MGTMRSVYLIIIIILFFAFISLSFGEIYEYRGVVFYPNGSQTVDVSKLHIDYENPDAFSIYISYRNSSFYLPYSKNITLNLPPKKFNISITISASRISRDEWRVYYKIINNYPYSILFNISFPGGFNIKNASVLVPAKSYKIITLSKIQNSNILYFGDSNISFEVPAKLMIRYSLPIPFSIIKSNKILSNGSIEWTAIYIIKNDKNVSLNVNASYWAVVNNTKIDFGNYSYIIEPNENVSQSFNITSDYVPIFYLKFYAWRDVYETIKIKPAIKVDNSYIIGIGKVEGLSFNIPYYNYMEREIKKKKEEKENEESSKTINQMQRHKKEEKSQTQETKKPSKNEMNKQEKERKYPLIIEEKFKKVAAAIATVTTTSITAMLIPPIFRRRSYIVDKGIFSIKDLELLSGTVYVPEGCKLGNILPGGITIIKLTDVEKDLARDLHEIYDIPLNSAKAIILGVKYGGRVFLSDKKAYDVAVEIGLEAYLF.

A signal peptide spans 1 to 25 (MGTMRSVYLIIIIILFFAFISLSFG). 2 stretches are compositionally biased toward basic and acidic residues: residues 306-316 (KKEEKENEESS) and 326-349 (KKEE…KQEK). Positions 306–349 (KKEEKENEESSKTINQMQRHKKEEKSQTQETKKPSKNEMNKQEK) are disordered.

This is an uncharacterized protein from Methanocaldococcus jannaschii (strain ATCC 43067 / DSM 2661 / JAL-1 / JCM 10045 / NBRC 100440) (Methanococcus jannaschii).